The chain runs to 581 residues: FAD-linked oxidoreductase easE (581 aa).

A signal peptide spans 1-25 (MYRLLGPLACLALAWFFTWAPSGRC). N-linked (GlcNAc...) asparagine glycans are attached at residues Asn44 and Asn73. The region spanning 122–306 (HQGRIPLYSA…AQATIRVFPD (185 aa)) is the FAD-binding PCMH-type domain. Asn369 is a glycosylation site (N-linked (GlcNAc...) asparagine).

It belongs to the oxygen-dependent FAD-linked oxidoreductase family. FAD serves as cofactor.

It functions in the pathway alkaloid biosynthesis; ergot alkaloid biosynthesis. Functionally, FAD-linked oxidoreductase; part of the gene cluster that mediates the biosynthesis of fungal ergot alkaloid. DmaW catalyzes the first step of ergot alkaloid biosynthesis by condensing dimethylallyl diphosphate (DMAP) and tryptophan to form 4-dimethylallyl-L-tryptophan. The second step is catalyzed by the methyltransferase easF that methylates 4-dimethylallyl-L-tryptophan in the presence of S-adenosyl-L-methionine, resulting in the formation of 4-dimethylallyl-L-abrine. The catalase easC and the FAD-dependent oxidoreductase easE then transform 4-dimethylallyl-L-abrine to chanoclavine-I which is further oxidized by easD in the presence of NAD(+), resulting in the formation of chanoclavine-I aldehyde. Agroclavine dehydrogenase easG then mediates the conversion of chanoclavine-I aldehyde to agroclavine via a non-enzymatic adduct reaction: the substrate is an iminium intermediate that is formed spontaneously from chanoclavine-I aldehyde in the presence of glutathione. Further conversion of agroclavine to paspalic acid is a two-step process involving oxidation of agroclavine to elymoclavine and of elymoclavine to paspalic acid, the second step being performed by the elymoclavine oxidase cloA. However, cloA does not encode a functional enzyme indicating that C.fusiformis terminates its ergot alkaloid pathway at elymoclavine. The polypeptide is FAD-linked oxidoreductase easE (Claviceps fusiformis (Ergot fungus)).